The following is a 376-amino-acid chain: N-glycosylase/DNA lyase (376 aa).

3 residues coordinate DNA: N134, R139, and R189. K241 (schiff-base intermediate with DNA) is an active-site residue. Residues P258 and D260 each contribute to the 8-oxoguanine site. DNA is bound at residue H262. Residues Q320 and F324 each coordinate 8-oxoguanine.

The protein belongs to the type-1 OGG1 family.

The protein resides in the nucleus. The catalysed reaction is 2'-deoxyribonucleotide-(2'-deoxyribose 5'-phosphate)-2'-deoxyribonucleotide-DNA = a 3'-end 2'-deoxyribonucleotide-(2,3-dehydro-2,3-deoxyribose 5'-phosphate)-DNA + a 5'-end 5'-phospho-2'-deoxyribonucleoside-DNA + H(+). DNA repair enzyme that incises DNA at 8-oxoG residues. Excises 7,8-dihydro-8-oxoguanine and 2,6-diamino-4-hydroxy-5-N-methylformamidopyrimidine (FAPY) from damaged DNA. Has a beta-lyase activity that nicks DNA 3' to the lesion. This Saccharomyces cerevisiae (strain ATCC 204508 / S288c) (Baker's yeast) protein is N-glycosylase/DNA lyase (OGG1).